Consider the following 300-residue polypeptide: Transmembrane protein 158 (300 aa).

The signal sequence occupies residues 1–20; sequence MLPLLAALLAAACPLPPVRG. A glycan (N-linked (GlcNAc...) asparagine) is linked at Asn-75. 2 helical membrane passes run 231-251 and 273-293; these read LVIV…IAGF and VPAG…AAAV.

This sequence belongs to the TMEM158 family. In terms of processing, N-glycosylated.

The protein localises to the membrane. Receptor for brain injury-derived neurotrophic peptide (BINP), a synthetic 13-mer peptide. This is Transmembrane protein 158 (TMEM158) from Homo sapiens (Human).